We begin with the raw amino-acid sequence, 293 residues long: Ribokinase (293 aa).

Residues Ser-11 to Asp-13, Gly-39 to Asn-43, and Glu-139 contribute to the substrate site. ATP is bound by residues Asn-183 and Thr-210 to Gly-215. K(+) is bound by residues Asp-236 and Thr-238. Residues Gly-241–Asp-242 and Asn-266 each bind ATP. Asp-242 contributes to the substrate binding site. The active-site Proton acceptor is Asp-242. K(+)-binding residues include Ser-272, Ser-275, and Gly-277.

The protein belongs to the carbohydrate kinase PfkB family. Ribokinase subfamily. As to quaternary structure, homodimer. Requires Mg(2+) as cofactor.

Its subcellular location is the cytoplasm. The enzyme catalyses D-ribose + ATP = D-ribose 5-phosphate + ADP + H(+). It participates in carbohydrate metabolism; D-ribose degradation; D-ribose 5-phosphate from beta-D-ribopyranose: step 2/2. With respect to regulation, activated by a monovalent cation that binds near, but not in, the active site. The most likely occupant of the site in vivo is potassium. Ion binding induces a conformational change that may alter substrate affinity. In terms of biological role, catalyzes the phosphorylation of ribose at O-5 in a reaction requiring ATP and magnesium. The resulting D-ribose-5-phosphate can then be used either for sythesis of nucleotides, histidine, and tryptophan, or as a component of the pentose phosphate pathway. The chain is Ribokinase from Bacillus subtilis (strain 168).